Consider the following 74-residue polypeptide: uncharacterized protein (74 aa).

This is an uncharacterized protein from Escherichia coli (strain K12).